The chain runs to 414 residues: Histidine--tRNA ligase (414 aa).

It belongs to the class-II aminoacyl-tRNA synthetase family. As to quaternary structure, homodimer.

Its subcellular location is the cytoplasm. It carries out the reaction tRNA(His) + L-histidine + ATP = L-histidyl-tRNA(His) + AMP + diphosphate + H(+). This Endomicrobium trichonymphae protein is Histidine--tRNA ligase.